Reading from the N-terminus, the 121-residue chain is Large ribosomal subunit protein uL14 (121 aa).

It belongs to the universal ribosomal protein uL14 family. In terms of assembly, part of the 50S ribosomal subunit. Forms a cluster with proteins L3 and L19. In the 70S ribosome, L14 and L19 interact and together make contacts with the 16S rRNA in bridges B5 and B8.

Functionally, binds to 23S rRNA. Forms part of two intersubunit bridges in the 70S ribosome. This Porphyromonas gingivalis (strain ATCC 33277 / DSM 20709 / CIP 103683 / JCM 12257 / NCTC 11834 / 2561) protein is Large ribosomal subunit protein uL14.